Consider the following 142-residue polypeptide: Large ribosomal subunit protein uL11 (142 aa).

This sequence belongs to the universal ribosomal protein uL11 family. Part of the ribosomal stalk of the 50S ribosomal subunit. Interacts with L10 and the large rRNA to form the base of the stalk. L10 forms an elongated spine to which L12 dimers bind in a sequential fashion forming a multimeric L10(L12)X complex. One or more lysine residues are methylated.

In terms of biological role, forms part of the ribosomal stalk which helps the ribosome interact with GTP-bound translation factors. This chain is Large ribosomal subunit protein uL11, found in Bradyrhizobium diazoefficiens (strain JCM 10833 / BCRC 13528 / IAM 13628 / NBRC 14792 / USDA 110).